The primary structure comprises 532 residues: Bifunctional purine biosynthesis protein PurH (532 aa).

Residues 1–148 (MQTPKPIKRA…KNHKDVTIVV (148 aa)) enclose the MGS-like domain.

Belongs to the PurH family.

The catalysed reaction is (6R)-10-formyltetrahydrofolate + 5-amino-1-(5-phospho-beta-D-ribosyl)imidazole-4-carboxamide = 5-formamido-1-(5-phospho-D-ribosyl)imidazole-4-carboxamide + (6S)-5,6,7,8-tetrahydrofolate. The enzyme catalyses IMP + H2O = 5-formamido-1-(5-phospho-D-ribosyl)imidazole-4-carboxamide. Its pathway is purine metabolism; IMP biosynthesis via de novo pathway; 5-formamido-1-(5-phospho-D-ribosyl)imidazole-4-carboxamide from 5-amino-1-(5-phospho-D-ribosyl)imidazole-4-carboxamide (10-formyl THF route): step 1/1. It participates in purine metabolism; IMP biosynthesis via de novo pathway; IMP from 5-formamido-1-(5-phospho-D-ribosyl)imidazole-4-carboxamide: step 1/1. The protein is Bifunctional purine biosynthesis protein PurH of Alteromonas mediterranea (strain DSM 17117 / CIP 110805 / LMG 28347 / Deep ecotype).